A 246-amino-acid chain; its full sequence is Ubiquinone biosynthesis O-methyltransferase (246 aa).

4 residues coordinate S-adenosyl-L-methionine: Arg44, Gly63, Asp84, and Met128.

Belongs to the methyltransferase superfamily. UbiG/COQ3 family.

It catalyses the reaction a 3-demethylubiquinol + S-adenosyl-L-methionine = a ubiquinol + S-adenosyl-L-homocysteine + H(+). The catalysed reaction is a 3-(all-trans-polyprenyl)benzene-1,2-diol + S-adenosyl-L-methionine = a 2-methoxy-6-(all-trans-polyprenyl)phenol + S-adenosyl-L-homocysteine + H(+). It functions in the pathway cofactor biosynthesis; ubiquinone biosynthesis. In terms of biological role, O-methyltransferase that catalyzes the 2 O-methylation steps in the ubiquinone biosynthetic pathway. The protein is Ubiquinone biosynthesis O-methyltransferase of Xylella fastidiosa (strain 9a5c).